Here is a 516-residue protein sequence, read N- to C-terminus: Nucleolar complex protein 4 homolog (516 aa).

The next 3 helical transmembrane spans lie at 296 to 316 (SACD…FILI), 347 to 367 (FFHL…LVAA), and 375 to 395 (LALT…CNLL).

It belongs to the CBF/MAK21 family.

The protein localises to the nucleus membrane. It is found in the nucleus. It localises to the nucleolus. This chain is Nucleolar complex protein 4 homolog (Noc4l), found in Mus musculus (Mouse).